Reading from the N-terminus, the 365-residue chain is Pyridoxal reductase, chloroplastic (365 aa).

Residues 1-15 (MALTLSTTKTFTNIN) constitute a chloroplast transit peptide. Catalysis depends on Tyr-94, which acts as the Proton donor.

The protein belongs to the aldo/keto reductase family. As to quaternary structure, monomer. In terms of tissue distribution, expressed in cotyledons, embryos, flowers, shoots, roots and seeds.

It is found in the plastid. The protein localises to the chloroplast. It carries out the reaction pyridoxine + NADP(+) = pyridoxal + NADPH + H(+). Its pathway is cofactor degradation; B6 vitamer degradation; pyridoxal from pyridoxine (dehydrogenase route): step 1/1. Functionally, catalyzes the reduction of pyridoxal (PL) with NADPH and oxidation of pyridoxine (PN) with NADP(+). Involved in the PLP salvage pathway. This is Pyridoxal reductase, chloroplastic (PLR1) from Arabidopsis thaliana (Mouse-ear cress).